The chain runs to 217 residues: Somatotropin (217 aa).

An N-terminal signal peptide occupies residues 1–26 (MATGSRTSLLLAFGLLCLPWLQEGSA). Histidine 44 contributes to the Zn(2+) binding site. Cysteine 79 and cysteine 191 are oxidised to a cystine. A Phosphoserine modification is found at serine 132. Glutamine 163 is modified (deamidated glutamine; by deterioration). Serine 176 carries the post-translational modification Phosphoserine. At asparagine 178 the chain carries Deamidated asparagine; by deterioration. Glutamate 200 lines the Zn(2+) pocket. Cysteine 208 and cysteine 215 are joined by a disulfide.

The protein belongs to the somatotropin/prolactin family. In terms of assembly, monomer, dimer, trimer, tetramer and pentamer, disulfide-linked or non-covalently associated, in homomeric and heteromeric combinations. Can also form a complex either with GHBP or with the alpha2-macroglobulin complex.

It is found in the secreted. Plays an important role in growth control. Its major role in stimulating body growth is to stimulate the liver and other tissues to secrete IGF1. It stimulates both the differentiation and proliferation of myoblasts. It also stimulates amino acid uptake and protein synthesis in muscle and other tissues. The chain is Somatotropin (GH1) from Homo sapiens (Human).